The following is a 373-amino-acid chain: Peroxisomal biogenesis factor 3 (373 aa).

The Cytoplasmic segment spans residues 1-15 (MFRSTWNFLKRHKKK). The segment at 1–45 (MFRSTWNFLKRHKKKCIFLGTVLGGVYILGKYGQKKIREIQEREA) is targeting to peroxisomes. The chain crosses the membrane as a helical span at residues 16–36 (CIFLGTVLGGVYILGKYGQKK). Residues 37–116 (IREIQEREAA…LKIISFTRSI (80 aa)) lie on the Peroxisomal side of the membrane. Residues 117 to 140 (VAVYSTCMLVVLLRVQLNIIGGYI) form a helical membrane-spanning segment. Residues 120-136 (YSTCMLVVLLRVQLNII) are interaction with PEX19. The Cytoplasmic segment spans residues 141-373 (YLDNAAVGKN…AFSTPQQLEK (233 aa)).

Belongs to the peroxin-3 family. Interacts with PEX19.

The protein localises to the peroxisome membrane. Its function is as follows. Involved in peroxisome biosynthesis and integrity. Assembles membrane vesicles before the matrix proteins are translocated. As a docking factor for PEX19, is necessary for the import of peroxisomal membrane proteins in the peroxisomes. The sequence is that of Peroxisomal biogenesis factor 3 (PEX3) from Bos taurus (Bovine).